We begin with the raw amino-acid sequence, 523 residues long: MLSRLARVQPKCQQLAHFSTSKSAAAAPTVKLWIDGQAVESKTTDFVELTNPATNEVIAMVPNATQAEMQAAVDSAKNAFNTWKNTSPLTRQQCMFKLQALIKRDMKKLAESITIEQGKTLPDAEGDVSRGLQVVEHACSVPSLMMGETLPNVSRDMDTHSYRIPLGVTAGICPFNFPAMIPLWMFPVALATGNTMVIKPSEQDPGAAQLLVELAKEAGVPDGCVNIIHGQHSAVNFICDNPDIKAISFVGGDAAGKHIYERGAKNGKRVQSNMGAKNHGVIMADANKEQTLNQLTAAAFGAAGQRCMALTTAVLVGEARAWLPELVEKAKNLKVNAGWKPDTDIGPLISKQSKARVLRLIESAKKEGAQVPLDGSNITVPGFENGNFVGPTILAGVKPNMTCYREEIFGPVLVVMEAENLNEAIEIINNNPYGNGTAIFTSNGATARKFTNEVDVGQIGINVPIPVPLPMFSFTGSRGSFLGDLNFYGKAGIQFYTQWKTVTQYWNESLTELKPQMSFPQLK.

The N-terminal 22 residues, M1–K22, are a transit peptide targeting the mitochondrion. NAD(+) contacts are provided by F175, K199, and E202. Residue C307 is the Nucleophile of the active site. Position 407 (E407) interacts with NAD(+).

This sequence belongs to the aldehyde dehydrogenase family. In terms of assembly, homodimer.

Its subcellular location is the mitochondrion. It catalyses the reaction 2-methyl-3-oxopropanoate + NAD(+) + CoA + H2O = propanoyl-CoA + hydrogencarbonate + NADH + H(+). The catalysed reaction is 3-oxopropanoate + NAD(+) + CoA + H2O = hydrogencarbonate + acetyl-CoA + NADH + H(+). Probable malonate and methylmalonate semialdehyde dehydrogenase involved in the catabolism of valine, thymine, and compounds catabolized by way of beta-alanine, including uracil and cytidine. The chain is Probable methylmalonate-semialdehyde/malonate-semialdehyde dehydrogenase [acylating], mitochondrial (alh-8) from Caenorhabditis elegans.